We begin with the raw amino-acid sequence, 201 residues long: Adenylyl-sulfate kinase (201 aa).

35–42 (GLSGSGKS) contributes to the ATP binding site. S109 (phosphoserine intermediate) is an active-site residue.

The protein belongs to the APS kinase family.

It catalyses the reaction adenosine 5'-phosphosulfate + ATP = 3'-phosphoadenylyl sulfate + ADP + H(+). It functions in the pathway sulfur metabolism; hydrogen sulfide biosynthesis; sulfite from sulfate: step 2/3. In terms of biological role, catalyzes the synthesis of activated sulfate. This is Adenylyl-sulfate kinase from Escherichia coli O139:H28 (strain E24377A / ETEC).